The primary structure comprises 79 residues: Cyclotide phyb-A (79 aa).

A propeptide spanning residues 1 to 43 (MVGVNSLRSALYLIVLILFVQLTYFSDARVMDVDLSRAFLPLT) is cleaved from the precursor. The cyclopeptide (Gly-Asn) cross-link spans 44–73 (GIGCGESCVWIPCVSAAIGCSCSNKICYRN). Intrachain disulfides connect cysteine 47/cysteine 63, cysteine 51/cysteine 65, and cysteine 56/cysteine 70. Residues 74-79 (GIIPKK) constitute a propeptide that is removed on maturation.

This is a cyclic peptide. Post-translationally, contains 3 disulfide bonds. Expressed in midvein, lamina and periphery of leaves (at protein level).

Probably participates in a plant defense mechanism. The chain is Cyclotide phyb-A from Petunia hybrida (Petunia).